Reading from the N-terminus, the 801-residue chain is Mitochondrial intermediate peptidase (801 aa).

A mitochondrion-targeting transit peptide spans 1–41; sequence MKPQLLTPLRRRPWTCRQCLQRLQRLQQQTRRSFETAASPA. Residues 31–54 form a disordered region; sequence RRSFETAASPAPGHTQVDYIPADA. Position 565 (His-565) interacts with Zn(2+). Glu-566 is a catalytic residue. Zn(2+) is bound by residues His-569 and His-572.

The protein belongs to the peptidase M3 family. Zn(2+) is required as a cofactor.

The protein resides in the mitochondrion matrix. The enzyme catalyses Release of an N-terminal octapeptide as second stage of processing of some proteins imported into the mitochondrion.. In terms of biological role, cleaves proteins, imported into the mitochondrion, to their mature size. While most mitochondrial precursor proteins are processed to the mature form in one step by mitochondrial processing peptidase (MPP), the sequential cleavage by MIP of an octapeptide after initial processing by MPP is a required step for a subgroup of nuclear-encoded precursor proteins destined for the matrix or the inner membrane. The protein is Mitochondrial intermediate peptidase (oct1) of Aspergillus clavatus (strain ATCC 1007 / CBS 513.65 / DSM 816 / NCTC 3887 / NRRL 1 / QM 1276 / 107).